Consider the following 223-residue polypeptide: Large ribosomal subunit protein uL4 (223 aa).

Residues 49 to 106 (AAARQGTHSTKTRGEVSGGGRKPYRQKGTGRARQGSTRAPQFTGGGVVHGPKPRDYSQ) form a disordered region.

It belongs to the universal ribosomal protein uL4 family. As to quaternary structure, part of the 50S ribosomal subunit.

Functionally, one of the primary rRNA binding proteins, this protein initially binds near the 5'-end of the 23S rRNA. It is important during the early stages of 50S assembly. It makes multiple contacts with different domains of the 23S rRNA in the assembled 50S subunit and ribosome. Forms part of the polypeptide exit tunnel. This is Large ribosomal subunit protein uL4 from Mycobacterium bovis (strain ATCC BAA-935 / AF2122/97).